We begin with the raw amino-acid sequence, 446 residues long: Maltoporin (446 aa).

An N-terminal signal peptide occupies residues 1–25 (MMITLRKLPLAVAVAAGVMSAQAMA).

The protein belongs to the porin LamB (TC 1.B.3) family. As to quaternary structure, homotrimer formed of three 18-stranded antiparallel beta-barrels, containing three independent channels.

It is found in the cell outer membrane. The catalysed reaction is beta-maltose(in) = beta-maltose(out). Involved in the transport of maltose and maltodextrins. This chain is Maltoporin, found in Escherichia coli (strain K12 / MC4100 / BW2952).